A 226-amino-acid polypeptide reads, in one-letter code: DELTA-thalatoxin-Avl1b (226 aa).

The first 21 residues, 1 to 21 (MRHFVVFLYMFLALSIPTAFA), serve as a signal peptide directing secretion. A propeptide spanning residues 22–45 (KKHIVTKKGNHQDITNDNEGENAE) is cleaved from the precursor. The plays an important role in the hemolytic activity stretch occupies residues 50-59 (AVAGAVIAGG). Positions 58-77 (GGELALKILTKILDEIGKID) are N-terminal region. Phosphocholine contacts are provided by serine 101, valine 134, serine 152, proline 154, tyrosine 180, and tyrosine 184. The segment at 152–167 (SVPFDYNLYTNWWNVK) is trp-rich region, which is important for the binding to lipid membrane. Residues 191-193 (KPS) carry the Cell attachment site, crucial for protein stability motif.

This sequence belongs to the actinoporin family. Sea anemone subfamily. As to quaternary structure, octamer or nonamer in membranes. Monomer in the soluble state.

It localises to the secreted. Its subcellular location is the nematocyst. The protein resides in the target cell membrane. Its function is as follows. Pore-forming protein that forms cations-selective hydrophilic pores of around 1 nm and causes cytolysis. Pore formation is a multi-step process that involves specific recognition of membrane sphingomyelin (but neither cholesterol nor phosphatidylcholine) using aromatic rich region and adjacent phosphocholine (POC) binding site, firm binding to the membrane (mainly driven by hydrophobic interactions) accompanied by the transfer of the N-terminal region to the lipid-water interface and finally pore formation after oligomerization of monomers. In Actineria villosa (Okinawan sea anemone), this protein is DELTA-thalatoxin-Avl1b.